Consider the following 240-residue polypeptide: RING finger protein 151 (240 aa).

The segment at 20–58 (CSVCHGVLKRPVRLPCSHIFCKKCILRWLARQKTCPCCR) adopts an RING-type zinc-finger fold. The TRAF-type zinc finger occupies 101–156 (GHQDSCPFELMVCPNEGCMLRVPRGALDEHRQNCQHGAYHRCSLGCGATLGPVERA).

This is RING finger protein 151 (RNF151) from Bos taurus (Bovine).